The chain runs to 405 residues: Probable dual-specificity RNA methyltransferase RlmN (405 aa).

Over residues 1–15 (MSSTGSSVSTSGLVL) the composition is skewed to low complexity. The disordered stretch occupies residues 1 to 34 (MSSTGSSVSTSGLVLPSTPLAEPGKEVPLVVNTP). The Proton acceptor role is filled by Glu-130. The Radical SAM core domain maps to 142–386 (SAARATLCLS…VTVRDTRGSE (245 aa)). Cysteines 149 and 391 form a disulfide. [4Fe-4S] cluster is bound by residues Cys-156, Cys-160, and Cys-163. Residues 211-212 (GE), Ser-245, 268-270 (SLH), and Asn-348 contribute to the S-adenosyl-L-methionine site. Cys-391 (S-methylcysteine intermediate) is an active-site residue.

Belongs to the radical SAM superfamily. RlmN family. The cofactor is [4Fe-4S] cluster.

It localises to the cytoplasm. It carries out the reaction adenosine(2503) in 23S rRNA + 2 reduced [2Fe-2S]-[ferredoxin] + 2 S-adenosyl-L-methionine = 2-methyladenosine(2503) in 23S rRNA + 5'-deoxyadenosine + L-methionine + 2 oxidized [2Fe-2S]-[ferredoxin] + S-adenosyl-L-homocysteine. The catalysed reaction is adenosine(37) in tRNA + 2 reduced [2Fe-2S]-[ferredoxin] + 2 S-adenosyl-L-methionine = 2-methyladenosine(37) in tRNA + 5'-deoxyadenosine + L-methionine + 2 oxidized [2Fe-2S]-[ferredoxin] + S-adenosyl-L-homocysteine. Functionally, specifically methylates position 2 of adenine 2503 in 23S rRNA and position 2 of adenine 37 in tRNAs. The protein is Probable dual-specificity RNA methyltransferase RlmN of Cutibacterium acnes (strain DSM 16379 / KPA171202) (Propionibacterium acnes).